Reading from the N-terminus, the 262-residue chain is 1,2-epoxyphenylacetyl-CoA isomerase (262 aa).

It belongs to the enoyl-CoA hydratase/isomerase family.

The enzyme catalyses 2-(1,2-epoxy-1,2-dihydrophenyl)acetyl-CoA = 2-oxepin-2(3H)-ylideneacetyl-CoA. It participates in aromatic compound metabolism; phenylacetate degradation. Functionally, catalyzes the reversible conversion of the epoxide to 2-oxepin-2(3H)-ylideneacetyl-CoA (oxepin-CoA). The protein is 1,2-epoxyphenylacetyl-CoA isomerase (paaG) of Escherichia coli (strain K12).